A 392-amino-acid polypeptide reads, in one-letter code: Major outer membrane protein P.IA (392 aa).

Residues 1-19 (MRKKLTALVLSALPLAAVA) form the signal peptide.

The protein belongs to the Gram-negative porin family. As to quaternary structure, homotrimer.

The protein resides in the cell outer membrane. Its function is as follows. Serves as a slightly cation selective porin. Major antigen on the gonococcal cell surface and it may have pathogenic properties in addition to its porin activity. This chain is Major outer membrane protein P.IA (porA), found in Neisseria meningitidis serogroup B (strain ATCC BAA-335 / MC58).